We begin with the raw amino-acid sequence, 146 residues long: Aspartate carbamoyltransferase regulatory chain (146 aa).

Zn(2+) contacts are provided by cysteine 102, cysteine 107, cysteine 131, and cysteine 134.

It belongs to the PyrI family. Contains catalytic and regulatory chains. Zn(2+) serves as cofactor.

Its function is as follows. Involved in allosteric regulation of aspartate carbamoyltransferase. The chain is Aspartate carbamoyltransferase regulatory chain from Clostridium botulinum (strain Okra / Type B1).